Consider the following 106-residue polypeptide: Glutaredoxin-1 (106 aa).

Ala2 is modified (N-acetylalanine). The 104-residue stretch at Gln3–Lys106 folds into the Glutaredoxin domain. N6-succinyllysine is present on Lys9. 2 disulfides stabilise this stretch: Cys23/Cys26 and Cys79/Cys83.

It belongs to the glutaredoxin family.

The protein resides in the cytoplasm. Its function is as follows. Has a glutathione-disulfide oxidoreductase activity in the presence of NADPH and glutathione reductase. Reduces low molecular weight disulfides and proteins. The sequence is that of Glutaredoxin-1 (GLRX) from Sus scrofa (Pig).